Consider the following 339-residue polypeptide: MSRLTLALDVMGGDIGPRITIPASLIALEKDPMLSLLLFGDSQQILPLLENIPASMKERLTVCHCSRTIDNEHGISYALRHSKGTSMRLAIEAVQKGDAQGCVSAGNTAALMGLSKILLQPLKGIQRPALISVIPTVDGGKSVMLDLGANIDCDAENLYQFALMGSIFAENTLNLVYPRIALLNIGSEDIKGHKSIRDAAMLLEKDPALNYTGFIEGNFLLNGQADVIVSDGFVGNVALKTLEGAAKNVIALIKGKSKNSLLKPLFSWLLTHIFKESYQRLKRINPDEYNGASLIGLTAVVVKSHGSANSDAFAYAIADAAFQTRQQIPTKILAGLEKY.

This sequence belongs to the PlsX family. As to quaternary structure, homodimer. Probably interacts with PlsY.

The protein localises to the cytoplasm. It catalyses the reaction a fatty acyl-[ACP] + phosphate = an acyl phosphate + holo-[ACP]. It functions in the pathway lipid metabolism; phospholipid metabolism. In terms of biological role, catalyzes the reversible formation of acyl-phosphate (acyl-PO(4)) from acyl-[acyl-carrier-protein] (acyl-ACP). This enzyme utilizes acyl-ACP as fatty acyl donor, but not acyl-CoA. The sequence is that of Phosphate acyltransferase from Pasteurella multocida (strain Pm70).